The following is a 580-amino-acid chain: Threonine--tRNA ligase (580 aa).

The catalytic stretch occupies residues Asp179–Pro476. Zn(2+) contacts are provided by Cys272, His323, and His453.

The protein belongs to the class-II aminoacyl-tRNA synthetase family. Homodimer. Requires Zn(2+) as cofactor.

The protein resides in the cytoplasm. It catalyses the reaction tRNA(Thr) + L-threonine + ATP = L-threonyl-tRNA(Thr) + AMP + diphosphate + H(+). Its function is as follows. Catalyzes the attachment of threonine to tRNA(Thr) in a two-step reaction: L-threonine is first activated by ATP to form Thr-AMP and then transferred to the acceptor end of tRNA(Thr). Also edits incorrectly charged L-seryl-tRNA(Thr). The chain is Threonine--tRNA ligase from Ureaplasma parvum serovar 3 (strain ATCC 27815 / 27 / NCTC 11736).